The following is a 502-amino-acid chain: Reduced meiotic recombination protein C1442.04c (502 aa).

Phosphoserine is present on residues Ser328, Ser330, and Ser331. Disordered stretches follow at residues 353-391 (NDLN…LRDN), 420-440 (GSLN…ENVD), and 454-502 (ESAF…PSDD). Acidic residues predominate over residues 367 to 378 (DGSEIITLDEND). Composition is skewed to polar residues over residues 420–436 (GSLN…TNDG) and 462–477 (GTIN…TTDT).

The protein belongs to the RMR1 family.

Its subcellular location is the cytoplasm. The protein resides in the nucleus. Functionally, required for normal levels of gene conversion events during meiosis. This is Reduced meiotic recombination protein C1442.04c from Schizosaccharomyces pombe (strain 972 / ATCC 24843) (Fission yeast).